Here is a 105-residue protein sequence, read N- to C-terminus: Vacuolar ATPase assembly integral membrane protein VMA21 homolog (105 aa).

Residues 1-26 (MSTKNKKAAGGNGGAPKQTRQQSHDS) form a disordered region. Over 1 to 36 (MSTKNKKAAGGNGGAPKQTRQQSHDSQDYSSFKTVL) the chain is Cytoplasmic. A helical transmembrane segment spans residues 37-57 (FYCMLIVFLPVLTFFVLKGFV). The Lumenal portion of the chain corresponds to 58–68 (LDQFLDISEVK). A helical transmembrane segment spans residues 69–89 (VNIASAVGAVVALHVALGLYI). Residues 90-105 (YRAYFGAPGSKASKTD) are Cytoplasmic-facing.

It belongs to the VMA21 family.

The protein localises to the endoplasmic reticulum membrane. It localises to the endoplasmic reticulum-Golgi intermediate compartment membrane. The protein resides in the cytoplasmic vesicle. Its subcellular location is the COPII-coated vesicle membrane. In terms of biological role, required for the assembly of the V0 complex of the vacuolar ATPase (V-ATPase) in the endoplasmic reticulum. This chain is Vacuolar ATPase assembly integral membrane protein VMA21 homolog, found in Drosophila yakuba (Fruit fly).